Here is a 379-residue protein sequence, read N- to C-terminus: Putative nickel insertion protein (379 aa).

This sequence belongs to the LarC family.

This is Putative nickel insertion protein from Methanocaldococcus jannaschii (strain ATCC 43067 / DSM 2661 / JAL-1 / JCM 10045 / NBRC 100440) (Methanococcus jannaschii).